A 518-amino-acid polypeptide reads, in one-letter code: Triacylglycerol lipase OBL1 (518 aa).

The chain crosses the membrane as a helical span at residues 93-113 (GFVVDFFLNLFSANGGFFGLL). Positions 337-341 (GHSLG) match the GXSXG motif. Ser339 (nucleophile) is an active-site residue. Residues Asp403 and His496 each act as charge relay system in the active site.

It belongs to the AB hydrolase superfamily. Lipase family. Expressed in pollen grains, pollen tubes, developing embryos, developing seeds and germinating seeds.

It localises to the lipid droplet. The protein localises to the membrane. It catalyses the reaction 1,2-di-(9Z-octadecenoyl)-glycerol + (9Z)-octadecenoate + H(+) = 1,2,3-tri-(9Z-octadecenoyl)-glycerol + H2O. The catalysed reaction is 1-(9Z-octadecenoyl)-glycerol + H2O = glycerol + (9Z)-octadecenoate + H(+). In terms of biological role, acid lipase that can hydrolyze a range of triacylglycerols without a clear preference for acyl-chains. Can also cleave 1,2-diacylglycerol, 1,3-diacylglycerol and 1-monoacylglycerol, but not phosphatidylcholine, phosphatidylethanolamine, or sterol esters. Required for pollen tube growth. Triacylglycerol hydrolysis by OBL1 may provide acyl groups for the synthesis of membrane lipids in growing pollen tubes. This Arabidopsis thaliana (Mouse-ear cress) protein is Triacylglycerol lipase OBL1.